The chain runs to 228 residues: Uracil-DNA glycosylase (228 aa).

The active-site Proton acceptor is aspartate 64.

Belongs to the uracil-DNA glycosylase (UDG) superfamily. UNG family.

The protein localises to the cytoplasm. It carries out the reaction Hydrolyzes single-stranded DNA or mismatched double-stranded DNA and polynucleotides, releasing free uracil.. In terms of biological role, excises uracil residues from the DNA which can arise as a result of misincorporation of dUMP residues by DNA polymerase or due to deamination of cytosine. This chain is Uracil-DNA glycosylase, found in Yersinia enterocolitica serotype O:8 / biotype 1B (strain NCTC 13174 / 8081).